A 271-amino-acid chain; its full sequence is Urease accessory protein UreD (271 aa).

It belongs to the UreD family. In terms of assembly, ureD, UreF and UreG form a complex that acts as a GTP-hydrolysis-dependent molecular chaperone, activating the urease apoprotein by helping to assemble the nickel containing metallocenter of UreC. The UreE protein probably delivers the nickel.

The protein resides in the cytoplasm. Functionally, required for maturation of urease via the functional incorporation of the urease nickel metallocenter. This chain is Urease accessory protein UreD, found in Actinomyces naeslundii.